The sequence spans 447 residues: GTPase Der (447 aa).

EngA-type G domains are found at residues 4 to 165 (QIIT…PEEE) and 180 to 357 (LQIV…KIWN). GTP contacts are provided by residues 10-17 (GRPNVGKS), 57-61 (DTPGL), 119-122 (NKCE), 186-193 (GRPNAGKS), 233-237 (DTAGL), and 298-301 (NKWD). The region spanning 358–443 (KKITTSKLNE…PIRFIYVKTK (86 aa)) is the KH-like domain.

The protein belongs to the TRAFAC class TrmE-Era-EngA-EngB-Septin-like GTPase superfamily. EngA (Der) GTPase family. As to quaternary structure, associates with the 50S ribosomal subunit.

GTPase that plays an essential role in the late steps of ribosome biogenesis. The polypeptide is GTPase Der (Rickettsia peacockii (strain Rustic)).